Consider the following 1821-residue polypeptide: PH-interacting protein (1821 aa).

Serine 136 is subject to Phosphoserine. WD repeat units lie at residues 181-222, 224-262, 265-310, 319-360, and 363-402; these read GHLS…ATLR, HAAE…PLAV, GHSA…INPR, RPGV…KISE, and FHTD…WKSI. Residue lysine 421 forms a Glycyl lysine isopeptide (Lys-Gly) (interchain with G-Cter in SUMO2) linkage. WD repeat units lie at residues 422 to 461, 464 to 504, and 512 to 551; these read ITKM…LIHV, GHED…KVRS, and QGHG…KYDK. 6 positions are modified to phosphoserine: serine 641, serine 659, serine 674, serine 677, serine 683, and serine 692. Disordered regions lie at residues 653-695 and 782-927; these read EQDL…SGQI and DLGD…RLAV. Over residues 665 to 681 the composition is skewed to polar residues; that stretch reads SNASRVNRGSVSSTSEV. A compositionally biased stretch (basic and acidic residues) spans 800–810; that stretch reads SALEETPRPLE. Positions 841-854 are enriched in low complexity; it reads SDGSSSDYSSDYSD. Phosphoserine is present on residues serine 879, serine 880, serine 881, and serine 911. Positions 912 to 924 are enriched in basic residues; that stretch reads PKKKKPKERKQKR. The interval 924-1129 is mediates interaction with IRS1; it reads RLAVGELTEN…MELIPNNAVF (206 aa). Residues 1156 to 1263 form the Bromo 1 domain; that stretch reads WGANPRDEEC…DLLLHFIKDQ (108 aa). 3 positions are modified to phosphoserine: serine 1281, serine 1283, and serine 1296. Positions 1282–1310 are disordered; that stretch reads DSEEEEKDADVPGTSTRKRKDHQPRRRLR. Positions 1297 to 1310 are enriched in basic residues; the sequence is TRKRKDHQPRRRLR. The residue at position 1315 (serine 1315) is a Phosphoserine. Residues 1316 to 1421 enclose the Bromo 2 domain; the sequence is YDIQAWKKQC…AFFEEHISSV (106 aa). Threonine 1359 carries the post-translational modification Phosphothreonine. Serine 1405 is subject to Phosphoserine. Basic residues predominate over residues 1435–1446; sequence NTISKKRKKRNR. A disordered region spans residues 1435 to 1507; it reads NTISKKRKKR…PESSSVVRTR (73 aa). Low complexity predominate over residues 1447–1457; it reads SSSLSSSAASS. Residue lysine 1470 forms a Glycyl lysine isopeptide (Lys-Gly) (interchain with G-Cter in SUMO1); alternate linkage. Residue lysine 1470 forms a Glycyl lysine isopeptide (Lys-Gly) (interchain with G-Cter in SUMO2); alternate linkage. The span at 1471 to 1482 shows a compositional bias: polar residues; that stretch reads SEVSTSPFSIPT. Serine 1479 is modified (phosphoserine). At lysine 1497 the chain carries N6-acetyllysine. Position 1525 is a phosphoserine (serine 1525). At lysine 1533 the chain carries N6-acetyllysine. Residues 1556–1576 show a composition bias toward polar residues; sequence STLSSPDPLTFSHATKNNSAK. 3 disordered regions span residues 1556 to 1596, 1623 to 1676, and 1740 to 1785; these read STLS…VFSK, QVNG…NSEQ, and RSNR…DSEE. Serine 1560 is modified (phosphoserine). A Glycyl lysine isopeptide (Lys-Gly) (interchain with G-Cter in SUMO2) cross-link involves residue lysine 1644. Phosphoserine is present on serine 1651. A Glycyl lysine isopeptide (Lys-Gly) (interchain with G-Cter in SUMO2) cross-link involves residue lysine 1670. Phosphoserine is present on residues serine 1762 and serine 1783.

As to quaternary structure, interacts (via bromo domain) with acetylated lysine residues on histone H1.4, histone H3 and H4 (in vitro). Interacts with IRS1 and IRS2. As to expression, widely expressed with most abundant expression detected in pancreatic islets, brain and skeletal muscle. Predominantly expressed in developing and regenerating neurons. Expressed in adult brain (granular layer of the olfactorium bulb, hippocampus, dentate gyrus and cerebellum internal granular layer). Expressed in the CA3 region of adult hippocampus, adult and fetal retina, perinatal dorsal root ganglion and embryonal olfactory epithelia (at protein level).

The protein resides in the nucleus. Its function is as follows. Probable regulator of the insulin and insulin-like growth factor signaling pathways. Stimulates cell proliferation through regulation of cyclin transcription and has an anti-apoptotic activity through AKT1 phosphorylation and activation. Plays a role in the regulation of cell morphology and cytoskeletal organization. This chain is PH-interacting protein (Phip), found in Mus musculus (Mouse).